We begin with the raw amino-acid sequence, 966 residues long: Mitogen-activated protein kinase kinase kinase 13 (966 aa).

Disordered regions lie at residues 1–22 (MANFQEHLSCSSSPHLPFSESK) and 93–112 (SEMAVSQGNSNTVDAESTSG). A compositionally biased stretch (polar residues) spans 96–112 (AVSQGNSNTVDAESTSG). In terms of domain architecture, Protein kinase spans 168–409 (ISELQWLGSG…FRQTLMHLDI (242 aa)). ATP contacts are provided by residues 174-182 (LGSGAQGAV) and Lys195. Catalysis depends on Asp279, which acts as the Proton acceptor. 2 leucine-zipper regions span residues 433–454 (VKKHFEKIKSEGTCIHRLDEEL) and 486–507 (LSAIMLQLEMREKELVKREQAV). Disordered regions lie at residues 534 to 652 (KRKG…SQSH), 744 to 834 (DIPS…RRQR), 846 to 873 (STFSSENFSVSDGEEGNTSDHSNSPDEL), and 887 to 906 (DLLSQTPEIPIDISSHSDGL). Over residues 567-581 (SPLSGSPKMSTSSSK) the composition is skewed to low complexity. Basic residues predominate over residues 582-594 (SRYRSKPRHRRGN). 2 stretches are compositionally biased toward polar residues: residues 609–629 (QPAQENSPNPTYLHQAQSQYP) and 781–795 (FSSCRSESSLGTSHL). Acidic residues predominate over residues 814-827 (DSSEEEEGEVDSEV). Residues 815-828 (SSEEEEGEVDSEVE) are acidic. Residues 846-855 (STFSSENFSV) are compositionally biased toward polar residues.

This sequence belongs to the protein kinase superfamily. STE Ser/Thr protein kinase family. MAP kinase kinase kinase subfamily. As to quaternary structure, homodimer; forms dimers through the leucine-zipper motif. Interacts with the C-terminus of MAPK8IP1 through the kinase catalytic domain. Binds PRDX3. Associates with the IKK complex through the kinase domain. The cofactor is Mg(2+). Post-translationally, autophosphorylated on serine and threonine residues.

The protein localises to the cytoplasm. It is found in the membrane. The enzyme catalyses L-seryl-[protein] + ATP = O-phospho-L-seryl-[protein] + ADP + H(+). It catalyses the reaction L-threonyl-[protein] + ATP = O-phospho-L-threonyl-[protein] + ADP + H(+). Its activity is regulated as follows. Activated by autophosphorylation and homodimerization. In terms of biological role, activates the JUN N-terminal pathway through activation of the MAP kinase kinase MAP2K7. Acts synergistically with PRDX3 to regulate the activation of NF-kappa-B in the cytosol. This activation is kinase-dependent and involves activating the IKK complex, the IKBKB-containing complex that phosphorylates inhibitors of NF-kappa-B. This Pongo abelii (Sumatran orangutan) protein is Mitogen-activated protein kinase kinase kinase 13.